The sequence spans 98 residues: Integration host factor subunit beta (98 aa).

This sequence belongs to the bacterial histone-like protein family. In terms of assembly, heterodimer of an alpha and a beta chain.

Its function is as follows. This protein is one of the two subunits of integration host factor, a specific DNA-binding protein that functions in genetic recombination as well as in transcriptional and translational control. The sequence is that of Integration host factor subunit beta from Pseudomonas fluorescens (strain Pf0-1).